Reading from the N-terminus, the 249-residue chain is Deoxyribose-phosphate aldolase (249 aa).

Aspartate 105 acts as the Proton donor/acceptor in catalysis. Catalysis depends on lysine 168, which acts as the Schiff-base intermediate with acetaldehyde. Lysine 216 serves as the catalytic Proton donor/acceptor.

This sequence belongs to the DeoC/FbaB aldolase family. DeoC type 1 subfamily.

The protein resides in the cytoplasm. It carries out the reaction 2-deoxy-D-ribose 5-phosphate = D-glyceraldehyde 3-phosphate + acetaldehyde. It functions in the pathway carbohydrate degradation; 2-deoxy-D-ribose 1-phosphate degradation; D-glyceraldehyde 3-phosphate and acetaldehyde from 2-deoxy-alpha-D-ribose 1-phosphate: step 2/2. In terms of biological role, catalyzes a reversible aldol reaction between acetaldehyde and D-glyceraldehyde 3-phosphate to generate 2-deoxy-D-ribose 5-phosphate. The sequence is that of Deoxyribose-phosphate aldolase from Corynebacterium jeikeium (strain K411).